Here is a 65-residue protein sequence, read N- to C-terminus: Large ribosomal subunit protein bL35 (65 aa).

Residues 1 to 26 (MPKMKTHRGAAKRFKKTGSGKLKRAK) form a disordered region.

Belongs to the bacterial ribosomal protein bL35 family.

The polypeptide is Large ribosomal subunit protein bL35 (Clostridium novyi (strain NT)).